A 214-amino-acid polypeptide reads, in one-letter code: ATP synthase subunit a (214 aa).

6 consecutive transmembrane segments (helical) span residues 9–29 (LDGM…VFMI), 64–84 (IMMV…TYGI), 88–108 (LWVN…SGYI), 121–141 (SGAP…SIMI), 150–170 (LVAN…VLSS), and 182–202 (LIMV…AYIF).

The protein belongs to the ATPase A chain family. In terms of assembly, F-type ATPases have 2 components, CF(1) - the catalytic core - and CF(0) - the membrane proton channel. CF(1) has five subunits: alpha(3), beta(3), gamma(1), delta(1), epsilon(1). CF(0) has three main subunits: a, b and c.

It localises to the mitochondrion inner membrane. In terms of biological role, mitochondrial membrane ATP synthase (F(1)F(0) ATP synthase or Complex V) produces ATP from ADP in the presence of a proton gradient across the membrane which is generated by electron transport complexes of the respiratory chain. F-type ATPases consist of two structural domains, F(1) - containing the extramembraneous catalytic core and F(0) - containing the membrane proton channel, linked together by a central stalk and a peripheral stalk. During catalysis, ATP synthesis in the catalytic domain of F(1) is coupled via a rotary mechanism of the central stalk subunits to proton translocation. Key component of the proton channel; it may play a direct role in the translocation of protons across the membrane. In Albinaria caerulea (Land snail), this protein is ATP synthase subunit a (ATP6).